The following is a 223-amino-acid chain: N-(5'-phosphoribosyl)anthranilate isomerase (223 aa).

Belongs to the TrpF family.

It carries out the reaction N-(5-phospho-beta-D-ribosyl)anthranilate = 1-(2-carboxyphenylamino)-1-deoxy-D-ribulose 5-phosphate. It participates in amino-acid biosynthesis; L-tryptophan biosynthesis; L-tryptophan from chorismate: step 3/5. The polypeptide is N-(5'-phosphoribosyl)anthranilate isomerase (Bradyrhizobium diazoefficiens (strain JCM 10833 / BCRC 13528 / IAM 13628 / NBRC 14792 / USDA 110)).